A 153-amino-acid chain; its full sequence is Transcriptional repressor NrdR (153 aa).

A zinc finger spans residues 3 to 34 (CPFCGHLEDRVIDSRAGGAGEVIRRRRECASC). One can recognise an ATP-cone domain in the interval 49 to 139 (PTVVKKDGRR…VYRSFRDIDQ (91 aa)).

Belongs to the NrdR family. Requires Zn(2+) as cofactor.

Its function is as follows. Negatively regulates transcription of bacterial ribonucleotide reductase nrd genes and operons by binding to NrdR-boxes. The polypeptide is Transcriptional repressor NrdR (Sorangium cellulosum (strain So ce56) (Polyangium cellulosum (strain So ce56))).